The sequence spans 339 residues: Dihydroorotate dehydrogenase (quinone) (339 aa).

Residues 62-66 (AGMDK) and threonine 86 each bind FMN. Lysine 66 is a binding site for substrate. 111–115 (NRMGF) contacts substrate. FMN contacts are provided by asparagine 139 and asparagine 172. Asparagine 172 provides a ligand contact to substrate. The active-site Nucleophile is the serine 175. Residue asparagine 177 participates in substrate binding. Lysine 217 and threonine 245 together coordinate FMN. Residue 246 to 247 (NT) participates in substrate binding. FMN is bound by residues glycine 268, glycine 297, and 318–319 (YS).

It belongs to the dihydroorotate dehydrogenase family. Type 2 subfamily. As to quaternary structure, monomer. FMN serves as cofactor.

It localises to the cell membrane. The enzyme catalyses (S)-dihydroorotate + a quinone = orotate + a quinol. The protein operates within pyrimidine metabolism; UMP biosynthesis via de novo pathway; orotate from (S)-dihydroorotate (quinone route): step 1/1. Catalyzes the conversion of dihydroorotate to orotate with quinone as electron acceptor. The sequence is that of Dihydroorotate dehydrogenase (quinone) from Shewanella sp. (strain MR-4).